Consider the following 109-residue polypeptide: Cell division suppressor protein YneA (109 aa).

In terms of domain architecture, LysM spans 39-90 (SEVNVSEGDSLWALADQYAGKSDMAKADFVSWVEKENNLADGHVEAGDSVVI).

The protein belongs to the YneA family.

It localises to the cytoplasm. Functionally, inhibits cell division during the SOS response. Affects a later stage of the cell division protein assembly, after the assembly of the Z ring, by probably suppressing recruitment of FtsL and/or DivIC to the division machinery. The protein is Cell division suppressor protein YneA of Listeria monocytogenes serotype 4b (strain CLIP80459).